The chain runs to 136 residues: Protein NrdI (136 aa).

The protein belongs to the NrdI family.

Its function is as follows. Probably involved in ribonucleotide reductase function. The polypeptide is Protein NrdI (Salmonella agona (strain SL483)).